A 251-amino-acid chain; its full sequence is Hydroxyacylglutathione hydrolase (251 aa).

Residues His-53, His-55, Asp-57, His-58, His-110, Asp-127, and His-165 each contribute to the Zn(2+) site.

Belongs to the metallo-beta-lactamase superfamily. Glyoxalase II family. In terms of assembly, monomer. It depends on Zn(2+) as a cofactor.

It catalyses the reaction an S-(2-hydroxyacyl)glutathione + H2O = a 2-hydroxy carboxylate + glutathione + H(+). It functions in the pathway secondary metabolite metabolism; methylglyoxal degradation; (R)-lactate from methylglyoxal: step 2/2. Functionally, thiolesterase that catalyzes the hydrolysis of S-D-lactoyl-glutathione to form glutathione and D-lactic acid. The polypeptide is Hydroxyacylglutathione hydrolase (Escherichia coli O6:K15:H31 (strain 536 / UPEC)).